Reading from the N-terminus, the 500-residue chain is Maturase K (500 aa).

The protein belongs to the intron maturase 2 family. MatK subfamily.

Its subcellular location is the plastid. The protein localises to the chloroplast. Functionally, usually encoded in the trnK tRNA gene intron. Probably assists in splicing its own and other chloroplast group II introns. In Proboscidea louisianica (Louisiana Devil's-claw), this protein is Maturase K.